A 330-amino-acid polypeptide reads, in one-letter code: RNA polymerase sigma factor RpoS (330 aa).

Residues 56 to 89 are sigma-70 factor domain-1; that stretch reads DATQLYLGEIGYSPLLTAEEEVYFARRALRGDVA. The segment at 94–164 is sigma-70 factor domain-2; sequence MIESNLRLVV…ERAIMNQTRT (71 aa). Residues 118–121 carry the Interaction with polymerase core subunit RpoC motif; the sequence is DLIE. Residues 174-249 form a sigma-70 factor domain-3 region; sequence ELNVYLRTAR…DEKENGPEDT (76 aa). Residues 262 to 315 are sigma-70 factor domain-4; the sequence is WLFELNAKQREVLARRFGLLGYEAATLEDVGREIGLTRERVRQIQVEGLRRLRE. The H-T-H motif DNA-binding region spans 288 to 307; it reads LEDVGREIGLTRERVRQIQV.

It belongs to the sigma-70 factor family. RpoS subfamily. In terms of assembly, interacts with the RNA polymerase core enzyme.

It localises to the cytoplasm. In terms of biological role, sigma factors are initiation factors that promote the attachment of RNA polymerase to specific initiation sites and are then released. This sigma factor is the master transcriptional regulator of the stationary phase and the general stress response. The sequence is that of RNA polymerase sigma factor RpoS from Salmonella dublin.